Consider the following 162-residue polypeptide: Peptide methionine sulfoxide reductase MsrA (162 aa).

Cysteine 16 is an active-site residue.

The protein belongs to the MsrA Met sulfoxide reductase family.

The enzyme catalyses L-methionyl-[protein] + [thioredoxin]-disulfide + H2O = L-methionyl-(S)-S-oxide-[protein] + [thioredoxin]-dithiol. It carries out the reaction [thioredoxin]-disulfide + L-methionine + H2O = L-methionine (S)-S-oxide + [thioredoxin]-dithiol. Its function is as follows. Has an important function as a repair enzyme for proteins that have been inactivated by oxidation. Catalyzes the reversible oxidation-reduction of methionine sulfoxide in proteins to methionine. In Geobacter sulfurreducens (strain ATCC 51573 / DSM 12127 / PCA), this protein is Peptide methionine sulfoxide reductase MsrA.